A 428-amino-acid chain; its full sequence is Kynureninase (428 aa).

Residues Thr-104, Thr-105, 132–135, Asp-213, His-216, and Tyr-238 each bind pyridoxal 5'-phosphate; that span reads FPSD. Lys-239 is subject to N6-(pyridoxal phosphate)lysine. Positions 267 and 295 each coordinate pyridoxal 5'-phosphate.

The protein belongs to the kynureninase family. As to quaternary structure, homodimer. The cofactor is pyridoxal 5'-phosphate.

The enzyme catalyses L-kynurenine + H2O = anthranilate + L-alanine + H(+). The catalysed reaction is 3-hydroxy-L-kynurenine + H2O = 3-hydroxyanthranilate + L-alanine + H(+). It functions in the pathway amino-acid degradation; L-kynurenine degradation; L-alanine and anthranilate from L-kynurenine: step 1/1. The protein operates within cofactor biosynthesis; NAD(+) biosynthesis; quinolinate from L-kynurenine: step 2/3. Catalyzes the cleavage of L-kynurenine (L-Kyn) and L-3-hydroxykynurenine (L-3OHKyn) into anthranilic acid (AA) and 3-hydroxyanthranilic acid (3-OHAA), respectively. This Bacillus anthracis protein is Kynureninase.